We begin with the raw amino-acid sequence, 437 residues long: Isthmin-2 (437 aa).

The signal sequence occupies residues Met1 to Ser25. The disordered stretch occupies residues Asp156 to Trp191. The span at Ala165 to Ser176 shows a compositional bias: acidic residues. Positions Glu197–Pro242 constitute a TSP type-1 domain. Cystine bridges form between Cys209–Cys236, Cys213–Cys241, and Cys224–Cys228. An N-linked (GlcNAc...) asparagine glycan is attached at Asn217. N-linked (GlcNAc...) asparagine glycans are attached at residues Asn258 and Asn349. An AMOP domain is found at Pro262–Asp425.

The protein belongs to the isthmin family.

The protein resides in the secreted. This is Isthmin-2 (ism2) from Danio rerio (Zebrafish).